A 124-amino-acid polypeptide reads, in one-letter code: Histone H2A (124 aa).

Positions 1-18 (MSGRGKGGKAKGKSKTRS) are enriched in basic residues. The segment at 1–23 (MSGRGKGGKAKGKSKTRSSRAGL) is disordered. Position 2 is an N-acetylserine (Ser-2). Ser-2 carries the post-translational modification Phosphoserine. Gln-104 bears the N5-methylglutamine mark.

The protein belongs to the histone H2A family. The nucleosome is a histone octamer containing two molecules each of H2A, H2B, H3 and H4 assembled in one H3-H4 heterotetramer and two H2A-H2B heterodimers. The octamer wraps approximately 147 bp of DNA. In terms of processing, phosphorylation of Ser-2 directly represses transcription.

The protein resides in the nucleus. Its subcellular location is the chromosome. Functionally, core component of nucleosome. Nucleosomes wrap and compact DNA into chromatin, limiting DNA accessibility to the cellular machineries which require DNA as a template. Histones thereby play a central role in transcription regulation, DNA repair, DNA replication and chromosomal stability. DNA accessibility is regulated via a complex set of post-translational modifications of histones, also called histone code, and nucleosome remodeling. The polypeptide is Histone H2A (Platynereis dumerilii (Dumeril's clam worm)).